The following is a 99-amino-acid chain: Protein S100-Z (99 aa).

2 consecutive EF-hand domains span residues 13–48 and 50–85; these read IRIF…FLSC and KETQ…LTVA. Ca(2+)-binding residues include Ser20, Glu23, Lys28, Glu33, Asp63, Asn65, Asp67, Glu69, and Glu74.

This sequence belongs to the S-100 family. As to quaternary structure, homodimer. Interacts with S100P. Highest level of expression in spleen and leukocytes.

This chain is Protein S100-Z, found in Homo sapiens (Human).